A 305-amino-acid chain; its full sequence is Sulfate adenylyltransferase subunit 2 (305 aa).

This sequence belongs to the PAPS reductase family. CysD subfamily. As to quaternary structure, heterodimer composed of CysD, the smaller subunit, and CysN.

It catalyses the reaction sulfate + ATP + H(+) = adenosine 5'-phosphosulfate + diphosphate. It participates in sulfur metabolism; hydrogen sulfide biosynthesis; sulfite from sulfate: step 1/3. Functionally, with CysN forms the ATP sulfurylase (ATPS) that catalyzes the adenylation of sulfate producing adenosine 5'-phosphosulfate (APS) and diphosphate, the first enzymatic step in sulfur assimilation pathway. APS synthesis involves the formation of a high-energy phosphoric-sulfuric acid anhydride bond driven by GTP hydrolysis by CysN coupled to ATP hydrolysis by CysD. The chain is Sulfate adenylyltransferase subunit 2 from Ectopseudomonas mendocina (strain ymp) (Pseudomonas mendocina).